The chain runs to 550 residues: Probable endochitinase (550 aa).

The N-terminal stretch at 1–16 (MLHYLATILWLAVAHA) is a signal peptide. 2 N-linked (GlcNAc...) asparagine; by host glycosylation sites follow: Asn146 and Asn172. The GH18 domain occupies 147 to 547 (KTVAAYFVEW…NAMNERVRVK (401 aa)). Glu304 (proton donor) is an active-site residue. N-linked (GlcNAc...) asparagine; by host glycosylation occurs at Asn344. The short motif at 547 to 550 (KDEL) is the Prevents secretion from ER element.

The protein belongs to the glycosyl hydrolase 18 family. Chitinase class II subfamily.

The protein localises to the host endoplasmic reticulum lumen. The enzyme catalyses Random endo-hydrolysis of N-acetyl-beta-D-glucosaminide (1-&gt;4)-beta-linkages in chitin and chitodextrins.. This Orgyia pseudotsugata (Douglas-fir tussock moth) protein is Probable endochitinase.